A 72-amino-acid polypeptide reads, in one-letter code: Translation initiation factor IF-1 (72 aa).

Positions 2-72 constitute an S1-like domain; that stretch reads AKEDVIEVEG…TRGRITYRYK (71 aa). A Phosphotyrosine modification is found at Y60.

The protein belongs to the IF-1 family. As to quaternary structure, component of the 30S ribosomal translation pre-initiation complex which assembles on the 30S ribosome in the order IF-2 and IF-3, IF-1 and N-formylmethionyl-tRNA(fMet); mRNA recruitment can occur at any time during PIC assembly.

It is found in the cytoplasm. Functionally, one of the essential components for the initiation of protein synthesis. Stabilizes the binding of IF-2 and IF-3 on the 30S subunit to which N-formylmethionyl-tRNA(fMet) subsequently binds. Helps modulate mRNA selection, yielding the 30S pre-initiation complex (PIC). Upon addition of the 50S ribosomal subunit IF-1, IF-2 and IF-3 are released leaving the mature 70S translation initiation complex. The chain is Translation initiation factor IF-1 from Halalkalibacterium halodurans (strain ATCC BAA-125 / DSM 18197 / FERM 7344 / JCM 9153 / C-125) (Bacillus halodurans).